The following is a 230-amino-acid chain: MYDIKKWRHIFKLDPAKHISDDDLDAICMSQTDAIMIGGTDDVTEDNVIHLMSRVRRYPLPLVLEISNIESVMPGFDFYFVPTVLNSTDVAFHNGTLLEALKTYGHSIDFEEVIFEGYVVCNADSKVAKHTKANTDLTTEDLEAYAQMVNHLYRLPVMYIEYSGIYGDVSKVQAVSEHLTETQLFYGGGISSEQQATEMAAIADTIIVGDIIYKDIKKALKTVKIKESSK.

Position 12 (Lys-12) interacts with sn-glycerol 1-phosphate. Positions 14 and 40 each coordinate Mg(2+). Sn-glycerol 1-phosphate-binding positions include 159–164 (YIEYSG), Gly-189, and 209–210 (GD).

It belongs to the GGGP/HepGP synthase family. Group I subfamily. In terms of assembly, homodimer. Mg(2+) is required as a cofactor.

It carries out the reaction sn-glycerol 1-phosphate + all-trans-heptaprenyl diphosphate = 3-heptaprenyl-sn-glycero-1-phosphate + diphosphate. Its pathway is membrane lipid metabolism; glycerophospholipid metabolism. Functionally, prenyltransferase that catalyzes in vivo the transfer of the heptaprenyl moiety of heptaprenyl pyrophosphate (HepPP; 35 carbon atoms) to the C3 hydroxyl of sn-glycerol-1-phosphate (G1P), producing heptaprenylglyceryl phosphate (HepGP). This reaction is an ether-bond-formation step in the biosynthesis of archaea-type G1P-based membrane lipids found in Bacillales. The chain is Heptaprenylglyceryl phosphate synthase from Staphylococcus aureus (strain MRSA252).